The primary structure comprises 497 residues: 4,4'-diaponeurosporene oxygenase (497 aa).

Residue 7–19 (VIGGGLGGISAAI) participates in FAD binding.

Belongs to the carotenoid/retinoid oxidoreductase family. CrtP subfamily. Requires FAD as cofactor.

It catalyses the reaction all-trans-4,4'-diaponeurosporene + 2 AH2 + 2 O2 = 4,4'-diaponeurosporenal + 2 A + 3 H2O. It functions in the pathway carotenoid biosynthesis; staphyloxanthin biosynthesis; staphyloxanthin from farnesyl diphosphate: step 3/5. Functionally, involved in the biosynthesis of the yellow-orange carotenoid staphyloxanthin, which plays a role in the virulence via its protective function against oxidative stress. Catalyzes the oxidation of the terminal methyl side group of 4,4'-diaponeurosporene to form 4,4'-diaponeurosporen-4-al. The sequence is that of 4,4'-diaponeurosporene oxygenase from Staphylococcus aureus (strain USA300).